Here is a 99-residue protein sequence, read N- to C-terminus: Malonate decarboxylase acyl carrier protein (99 aa).

The residue at position 25 (Ser-25) is an O-(phosphoribosyl dephospho-coenzyme A)serine.

Belongs to the MdcC family. Covalently binds the prosthetic group of malonate decarboxylase.

The protein resides in the cytoplasm. In terms of biological role, subunit of malonate decarboxylase, it is an acyl carrier protein to which acetyl and malonyl thioester residues are bound via a 2'-(5''-phosphoribosyl)-3'-dephospho-CoA prosthetic group and turn over during the catalytic mechanism. The chain is Malonate decarboxylase acyl carrier protein from Pseudomonas aeruginosa (strain UCBPP-PA14).